The chain runs to 330 residues: Phenylalanine--tRNA ligase alpha subunit (330 aa).

Residue E254 coordinates Mg(2+).

Belongs to the class-II aminoacyl-tRNA synthetase family. Phe-tRNA synthetase alpha subunit type 1 subfamily. As to quaternary structure, tetramer of two alpha and two beta subunits. Requires Mg(2+) as cofactor.

It localises to the cytoplasm. It catalyses the reaction tRNA(Phe) + L-phenylalanine + ATP = L-phenylalanyl-tRNA(Phe) + AMP + diphosphate + H(+). This Neisseria meningitidis serogroup A / serotype 4A (strain DSM 15465 / Z2491) protein is Phenylalanine--tRNA ligase alpha subunit (pheS).